The sequence spans 87 residues: Small ribosomal subunit protein bS18B (87 aa).

The protein belongs to the bacterial ribosomal protein bS18 family. In terms of assembly, part of the 30S ribosomal subunit. Forms a tight heterodimer with protein bS6.

Functionally, binds as a heterodimer with protein bS6 to the central domain of the 16S rRNA, where it helps stabilize the platform of the 30S subunit. The protein is Small ribosomal subunit protein bS18B of Mycobacterium marinum (strain ATCC BAA-535 / M).